The following is a 317-amino-acid chain: MTINDSVISEQGMCEEEQVARIAWFYYHDGLTQSEISDRLGLTRLKVSRLLEKGHQSGIIRVQINSRFEGCLEYETQLRRQFSLQHVRVIPGLADADVGGRLGIGAAHMLMSLLQPQQMLAIGFGEATMNTLQRLSGFISSQQIRLVTLSGGVGSYMTGIGQLNAACSVNIIPAPLRASSADIARTLKNENCVKDVLLAAQAADVAIVGIGAVSQQDDATIIRSGYISQGEQLMIGRKGAVGDILGYFFDAKGDVVTDIKIHNELIGLPLSALKTIPVRVGVAGGENKAEAIAAAMKGGYINALVTDQDTAAAILRS.

Positions 33–56 (QSEISDRLGLTRLKVSRLLEKGHQ) form a DNA-binding region, H-T-H motif.

This sequence belongs to the SorC transcriptional regulatory family.

The protein resides in the cytoplasm. Inactivated by phosphorylated autoinducer-2 (phospho-AI-2). Phospho-AI-2 acts by binding to LsrR, which is then unable to bind to the promoter regions, allowing the transcription of the target genes. Transcriptional regulator that represses the expression of the lsr operon in the absence of the quorum-sensing signaling molecule autoinducer 2 (AI-2). It also represses the expression of the lsrRK operon. Acts by binding directly to the lsrA and lsrR promoter regions. In the presence of phosphorylated autoinducer-2 (phospho-AI-2), LsrR is inactivated, leading to the transcription of the genes. In Escherichia coli O157:H7, this protein is Transcriptional regulator LsrR (lsrR).